Consider the following 319-residue polypeptide: Sulfate adenylyltransferase subunit 2 (319 aa).

Disordered stretches follow at residues 1–22 (MNPG…TRRP) and 296–319 (RGAT…EGYF).

The protein belongs to the PAPS reductase family. CysD subfamily.

The enzyme catalyses sulfate + ATP + H(+) = adenosine 5'-phosphosulfate + diphosphate. It participates in antibiotic biosynthesis; mitomycin C biosynthesis. In terms of biological role, with CysN forms the ATP sulfurylase (ATPS) that catalyzes the adenylation of sulfate producing adenosine 5'-phosphosulfate (APS) and diphosphate, the first enzymatic step in sulfur assimilation pathway. APS synthesis involves the formation of a high-energy phosphoric-sulfuric acid anhydride bond driven by GTP hydrolysis by CysN coupled to ATP hydrolysis by CysD. In Streptomyces lavendulae, this protein is Sulfate adenylyltransferase subunit 2 (mmcV).